The primary structure comprises 218 residues: MTQVASTNSPLLHAEQLSSIRGGRVLFENLDFSVSAGQLWQVSGPNGAGKSSLLRILTGLLEPSDGVVSFDGQPLNQNWSEYCQQLLFIGHKAAVKGELSALENFHWQQQLSSVQDVDAWDLLEKLGLLGLEDELTTRLSAGQQRRVALTRLWATQASLWILDEPFTALDVQGIALLQQRFVEHLDAGGTIIFTSHQSLTLSGLTPEKLSLEYRGEVL.

The ABC transporter domain occupies 12–217 (LHAEQLSSIR…KLSLEYRGEV (206 aa)). 44–51 (GPNGAGKS) is an ATP binding site.

This sequence belongs to the ABC transporter superfamily. CcmA exporter (TC 3.A.1.107) family. As to quaternary structure, the complex is composed of two ATP-binding proteins (CcmA) and two transmembrane proteins (CcmB).

Its subcellular location is the cell inner membrane. It catalyses the reaction heme b(in) + ATP + H2O = heme b(out) + ADP + phosphate + H(+). Functionally, part of the ABC transporter complex CcmAB involved in the biogenesis of c-type cytochromes; once thought to export heme, this seems not to be the case, but its exact role is uncertain. Responsible for energy coupling to the transport system. This chain is Cytochrome c biogenesis ATP-binding export protein CcmA, found in Idiomarina loihiensis (strain ATCC BAA-735 / DSM 15497 / L2-TR).